The primary structure comprises 364 residues: UDP-N-acetylglucosamine--N-acetylmuramyl-(pentapeptide) pyrophosphoryl-undecaprenol N-acetylglucosamine transferase (364 aa).

UDP-N-acetyl-alpha-D-glucosamine-binding positions include 10 to 12, asparagine 128, arginine 170, serine 199, isoleucine 250, and glutamine 295; that span reads TGG.

This sequence belongs to the glycosyltransferase 28 family. MurG subfamily.

The protein resides in the cell inner membrane. The enzyme catalyses di-trans,octa-cis-undecaprenyl diphospho-N-acetyl-alpha-D-muramoyl-L-alanyl-D-glutamyl-meso-2,6-diaminopimeloyl-D-alanyl-D-alanine + UDP-N-acetyl-alpha-D-glucosamine = di-trans,octa-cis-undecaprenyl diphospho-[N-acetyl-alpha-D-glucosaminyl-(1-&gt;4)]-N-acetyl-alpha-D-muramoyl-L-alanyl-D-glutamyl-meso-2,6-diaminopimeloyl-D-alanyl-D-alanine + UDP + H(+). It participates in cell wall biogenesis; peptidoglycan biosynthesis. Its function is as follows. Cell wall formation. Catalyzes the transfer of a GlcNAc subunit on undecaprenyl-pyrophosphoryl-MurNAc-pentapeptide (lipid intermediate I) to form undecaprenyl-pyrophosphoryl-MurNAc-(pentapeptide)GlcNAc (lipid intermediate II). This is UDP-N-acetylglucosamine--N-acetylmuramyl-(pentapeptide) pyrophosphoryl-undecaprenol N-acetylglucosamine transferase from Chlorobium limicola (strain DSM 245 / NBRC 103803 / 6330).